We begin with the raw amino-acid sequence, 365 residues long: Histidine biosynthesis bifunctional protein HisB (365 aa).

A histidinol-phosphatase region spans residues 1-176 (MTQQPTLFID…VADPKGLGQP (176 aa)). Residue Asp10 is the Nucleophile of the active site. Residues Asp10 and Asp12 each coordinate Mg(2+). The active-site Proton donor is the Asp12. Cys93, His95, Cys101, and Cys103 together coordinate Zn(2+). Asp130 provides a ligand contact to Mg(2+). The segment at 177-365 (RHAVVARKTK…NEMPSSKGVL (189 aa)) is imidazoleglycerol-phosphate dehydratase.

In the N-terminal section; belongs to the histidinol-phosphatase family. It in the C-terminal section; belongs to the imidazoleglycerol-phosphate dehydratase family. Requires Mg(2+) as cofactor. The cofactor is Zn(2+).

Its subcellular location is the cytoplasm. The enzyme catalyses D-erythro-1-(imidazol-4-yl)glycerol 3-phosphate = 3-(imidazol-4-yl)-2-oxopropyl phosphate + H2O. It catalyses the reaction L-histidinol phosphate + H2O = L-histidinol + phosphate. It functions in the pathway amino-acid biosynthesis; L-histidine biosynthesis; L-histidine from 5-phospho-alpha-D-ribose 1-diphosphate: step 6/9. It participates in amino-acid biosynthesis; L-histidine biosynthesis; L-histidine from 5-phospho-alpha-D-ribose 1-diphosphate: step 8/9. The sequence is that of Histidine biosynthesis bifunctional protein HisB from Mannheimia succiniciproducens (strain KCTC 0769BP / MBEL55E).